A 1272-amino-acid polypeptide reads, in one-letter code: Fused isobutyryl-CoA mutase (1272 aa).

Positions 20 to 158 constitute a B12-binding domain; the sequence is RLRFVTAAAL…ARCAEGARAA (139 aa). His-33 contacts adenosylcob(III)alamin. Residues 163 to 536 are GTPase chaperone MeaI; sequence ESQVGAWAAE…YRHVAEALRK (374 aa). A disordered region spans residues 193–240; the sequence is GAVARNPSSEASRVAAAGRGDHLDRGVRAASTADTADTANTANTANTA. The span at 221-240 shows a compositional bias: low complexity; sequence AASTADTADTANTANTANTA. Position 334–339 (334–339) interacts with GTP; it reads GAGKSS. Residues Ser-338, Ile-363, Asp-364, and Asp-377 each contribute to the Mg(2+) site. A GTP-binding site is contributed by Arg-380. Glu-429 and Thr-430 together coordinate Mg(2+). 476–479 is a binding site for GTP; that stretch reads NKFD. The linker stretch occupies residues 537–758; that stretch reads HGLRSGGGRL…MLDNLPGYFP (222 aa). Composition is skewed to low complexity over residues 614 to 631 and 639 to 663; these read TVAT…KANA and ANAS…ATPT. The tract at residues 614–667 is disordered; the sequence is TVATSASPGASASSKANACTSTSSKANASPGANTTANSNASATSGTATPTDALN. Substrate contacts are provided by Phe-766, Arg-801, Arg-907, Tyr-951, Ser-1000, Arg-1035, and Lys-1040. Residues Glu-1152 and Asn-1271 each contribute to the GTP site.

This sequence belongs to the IcmF family. In terms of assembly, homodimer. Adenosylcob(III)alamin is required as a cofactor. Mg(2+) serves as cofactor.

The enzyme catalyses 2-methylpropanoyl-CoA = butanoyl-CoA. The catalysed reaction is GTP + H2O = GDP + phosphate + H(+). In terms of biological role, catalyzes the reversible interconversion of isobutyryl-CoA and n-butyryl-CoA, using radical chemistry. Also exhibits GTPase activity, associated with its G-protein domain (MeaI) that functions as a chaperone that assists cofactor delivery and proper holo-enzyme assembly. Does not exhibit methylmalonyl-CoA mutase (MCM) activity. The sequence is that of Fused isobutyryl-CoA mutase from Paraburkholderia xenovorans (strain LB400).